The primary structure comprises 380 residues: Cytosolic acyl coenzyme A thioester hydrolase (380 aa).

In terms of domain architecture, HotDog ACOT-type 1 spans 50–168; the sequence is PCGACITGRI…TLWYVPLSLK (119 aa). N66 is an active-site residue. K168 and K198 each carry N6-acetyllysine. Residues 224–338 form the HotDog ACOT-type 2 domain; the sequence is SYSQSSLIHL…FFTYVSLSQE (115 aa). Residue D255 is part of the active site. K283 bears the N6-acetyllysine mark. The segment at 350-380 is disordered; it reads ETEDEKKRFEEGKGRYLQMKAKRQGHAEPQP. Basic and acidic residues predominate over residues 353-363; the sequence is DEKKRFEEGKG.

As to quaternary structure, homohexamer. In terms of tissue distribution, isoform 4 is expressed exclusively in brain.

Its subcellular location is the cytoplasm. The protein resides in the cytosol. The protein localises to the mitochondrion. It carries out the reaction hexadecanoyl-CoA + H2O = hexadecanoate + CoA + H(+). The enzyme catalyses octanoyl-CoA + H2O = octanoate + CoA + H(+). It catalyses the reaction dodecanoyl-CoA + H2O = dodecanoate + CoA + H(+). The catalysed reaction is (9Z)-octadecenoyl-CoA + H2O = (9Z)-octadecenoate + CoA + H(+). It carries out the reaction tetradecanoyl-CoA + H2O = tetradecanoate + CoA + H(+). The enzyme catalyses decanoyl-CoA + H2O = decanoate + CoA + H(+). It catalyses the reaction octadecanoyl-CoA + H2O = octadecanoate + CoA + H(+). It functions in the pathway lipid metabolism; fatty acid metabolism. In terms of biological role, catalyzes the hydrolysis of acyl-CoAs into free fatty acids and coenzyme A (CoASH), regulating their respective intracellular levels. Preferentially hydrolyzes palmitoyl-CoA, but has a broad specificity acting on other fatty acyl-CoAs with chain-lengths of C8-C18. May play an important physiological function in brain. This chain is Cytosolic acyl coenzyme A thioester hydrolase (ACOT7), found in Homo sapiens (Human).